The sequence spans 197 residues: Endoribonuclease YbeY (197 aa).

Positions 156, 160, and 166 each coordinate Zn(2+).

The protein belongs to the endoribonuclease YbeY family. Zn(2+) is required as a cofactor.

The protein localises to the cytoplasm. Functionally, single strand-specific metallo-endoribonuclease involved in late-stage 70S ribosome quality control and in maturation of the 3' terminus of the 16S rRNA. This chain is Endoribonuclease YbeY, found in Cupriavidus metallidurans (strain ATCC 43123 / DSM 2839 / NBRC 102507 / CH34) (Ralstonia metallidurans).